The chain runs to 198 residues: Ion-translocating oxidoreductase complex subunit B (198 aa).

The hydrophobic stretch occupies residues Met1–Ser26. Residues Glu32–Val90 form the 4Fe-4S domain. Cys49, Cys52, Cys57, Cys73, Cys114, Cys117, Cys120, Cys124, Cys144, Cys147, Cys150, and Cys154 together coordinate [4Fe-4S] cluster. 4Fe-4S ferredoxin-type domains are found at residues Lys105–Lys134 and Ala135–Leu164.

Belongs to the 4Fe4S bacterial-type ferredoxin family. RnfB subfamily. In terms of assembly, the complex is composed of six subunits: RnfA, RnfB, RnfC, RnfD, RnfE and RnfG. [4Fe-4S] cluster serves as cofactor.

It is found in the cell inner membrane. In terms of biological role, part of a membrane-bound complex that couples electron transfer with translocation of ions across the membrane. In Vibrio vulnificus (strain CMCP6), this protein is Ion-translocating oxidoreductase complex subunit B.